The following is a 55-amino-acid chain: Large ribosomal subunit protein bL33A (55 aa).

Belongs to the bacterial ribosomal protein bL33 family.

The polypeptide is Large ribosomal subunit protein bL33A (Mycobacterium sp. (strain JLS)).